Consider the following 262-residue polypeptide: Phenylalanine-4-hydroxylase (262 aa).

The Fe cation site is built by His121, His126, and Glu166.

Belongs to the biopterin-dependent aromatic amino acid hydroxylase family. In terms of assembly, monomer. Requires Fe(2+) as cofactor.

The enzyme catalyses (6R)-L-erythro-5,6,7,8-tetrahydrobiopterin + L-phenylalanine + O2 = (4aS,6R)-4a-hydroxy-L-erythro-5,6,7,8-tetrahydrobiopterin + L-tyrosine. The protein operates within amino-acid degradation; L-phenylalanine degradation; acetoacetate and fumarate from L-phenylalanine: step 1/6. The protein is Phenylalanine-4-hydroxylase (phhA) of Pseudomonas aeruginosa (strain ATCC 15692 / DSM 22644 / CIP 104116 / JCM 14847 / LMG 12228 / 1C / PRS 101 / PAO1).